The primary structure comprises 291 residues: 33 kDa chaperonin (291 aa).

Intrachain disulfides connect Cys237–Cys239 and Cys270–Cys273.

Belongs to the HSP33 family. In terms of processing, under oxidizing conditions two disulfide bonds are formed involving the reactive cysteines. Under reducing conditions zinc is bound to the reactive cysteines and the protein is inactive.

It localises to the cytoplasm. Its function is as follows. Redox regulated molecular chaperone. Protects both thermally unfolding and oxidatively damaged proteins from irreversible aggregation. Plays an important role in the bacterial defense system toward oxidative stress. The chain is 33 kDa chaperonin from Bacillus cereus (strain G9842).